We begin with the raw amino-acid sequence, 181 residues long: ATP-dependent protease subunit HslV (181 aa).

The active site involves Thr-7. Na(+) is bound by residues Ala-166, Cys-169, and Thr-172.

Belongs to the peptidase T1B family. HslV subfamily. In terms of assembly, a double ring-shaped homohexamer of HslV is capped on each side by a ring-shaped HslU homohexamer. The assembly of the HslU/HslV complex is dependent on binding of ATP.

The protein resides in the cytoplasm. It catalyses the reaction ATP-dependent cleavage of peptide bonds with broad specificity.. Allosterically activated by HslU binding. Its function is as follows. Protease subunit of a proteasome-like degradation complex believed to be a general protein degrading machinery. In Anaeromyxobacter dehalogenans (strain 2CP-1 / ATCC BAA-258), this protein is ATP-dependent protease subunit HslV.